The sequence spans 101 residues: NADH-quinone oxidoreductase subunit K (101 aa).

Transmembrane regions (helical) follow at residues 4–24, 29–49, and 65–85; these read VGHY…GIFI, IIVI…NLVA, and FVLT…VIYF.

It belongs to the complex I subunit 4L family. As to quaternary structure, NDH-1 is composed of 14 different subunits. Subunits NuoA, H, J, K, L, M, N constitute the membrane sector of the complex.

Its subcellular location is the cell inner membrane. The catalysed reaction is a quinone + NADH + 5 H(+)(in) = a quinol + NAD(+) + 4 H(+)(out). In terms of biological role, NDH-1 shuttles electrons from NADH, via FMN and iron-sulfur (Fe-S) centers, to quinones in the respiratory chain. The immediate electron acceptor for the enzyme in this species is believed to be ubiquinone. Couples the redox reaction to proton translocation (for every two electrons transferred, four hydrogen ions are translocated across the cytoplasmic membrane), and thus conserves the redox energy in a proton gradient. In Sphingopyxis alaskensis (strain DSM 13593 / LMG 18877 / RB2256) (Sphingomonas alaskensis), this protein is NADH-quinone oxidoreductase subunit K.